An 887-amino-acid polypeptide reads, in one-letter code: DNA gyrase subunit A (887 aa).

Positions leucine 35–leucine 501 constitute a Topo IIA-type catalytic domain. The active-site O-(5'-phospho-DNA)-tyrosine intermediate is the tyrosine 123. The short motif at glutamine 528–glycine 534 is the GyrA-box element. The tract at residues lysine 811 to arginine 865 is disordered. The segment covering aspartate 813–glutamine 823 has biased composition (acidic residues).

It belongs to the type II topoisomerase GyrA/ParC subunit family. Heterotetramer, composed of two GyrA and two GyrB chains. In the heterotetramer, GyrA contains the active site tyrosine that forms a transient covalent intermediate with DNA, while GyrB binds cofactors and catalyzes ATP hydrolysis.

It is found in the cytoplasm. The catalysed reaction is ATP-dependent breakage, passage and rejoining of double-stranded DNA.. Its function is as follows. A type II topoisomerase that negatively supercoils closed circular double-stranded (ds) DNA in an ATP-dependent manner to modulate DNA topology and maintain chromosomes in an underwound state. Negative supercoiling favors strand separation, and DNA replication, transcription, recombination and repair, all of which involve strand separation. Also able to catalyze the interconversion of other topological isomers of dsDNA rings, including catenanes and knotted rings. Type II topoisomerases break and join 2 DNA strands simultaneously in an ATP-dependent manner. The chain is DNA gyrase subunit A from Staphylococcus aureus (strain MSSA476).